The chain runs to 549 residues: Hydroxylamine reductase (549 aa).

Residues Cys3, Cys6, Cys18, and Cys25 each coordinate [2Fe-2S] cluster. His248, Glu272, Cys316, Cys404, Cys432, Cys457, Glu491, and Lys493 together coordinate hybrid [4Fe-2O-2S] cluster. Cys404 is modified (cysteine persulfide).

It belongs to the HCP family. Requires [2Fe-2S] cluster as cofactor. Hybrid [4Fe-2O-2S] cluster serves as cofactor.

The protein localises to the cytoplasm. It catalyses the reaction A + NH4(+) + H2O = hydroxylamine + AH2 + H(+). Its function is as follows. Catalyzes the reduction of hydroxylamine to form NH(3) and H(2)O. In Aeromonas hydrophila subsp. hydrophila (strain ATCC 7966 / DSM 30187 / BCRC 13018 / CCUG 14551 / JCM 1027 / KCTC 2358 / NCIMB 9240 / NCTC 8049), this protein is Hydroxylamine reductase.